A 400-amino-acid chain; its full sequence is Na(+)/H(+) antiporter NhaA (400 aa).

Transmembrane regions (helical) follow at residues 9–29 (FLVSEASGGIFLIAAAVIAMV), 60–80 (LILWVNDGLMAIFFFVLGLEL), 96–116 (VLPAVGAIGGIVVPAFIFYLF), 127–147 (WAIPTATDTAFALGIIMILGA), 155–175 (IFLVTLAIIDDVCAILIMAIF), 180–200 (LSLISFGVAAIVILGLLALNL), 210–230 (LILGIILWISVLKSGVHATLA), 263–283 (YFVLPVFAFVNAGISLKGIGL), 294–314 (VILGLFLGKQIGVFGFCFVAI), 327–347 (WISFYGLCILTGIGFTMSLFI), and 366–386 (VLIASVISGVLGYIVLYIASV).

Belongs to the NhaA Na(+)/H(+) (TC 2.A.33) antiporter family.

Its subcellular location is the cell inner membrane. The catalysed reaction is Na(+)(in) + 2 H(+)(out) = Na(+)(out) + 2 H(+)(in). In terms of biological role, na(+)/H(+) antiporter that extrudes sodium in exchange for external protons. The chain is Na(+)/H(+) antiporter NhaA from Campylobacter curvus (strain 525.92).